A 459-amino-acid polypeptide reads, in one-letter code: Friend virus susceptibility protein 1 (459 aa).

Residues 192 to 269 form a disordered region; that stretch reads EAELPTVLAS…LNSLAHSNRQ (78 aa). Positions 213–223 are enriched in basic and acidic residues; that stretch reads SKERTQQDKAD. Residues 226 to 238 show a composition bias toward polar residues; the sequence is QIQSSTSLVTSEP.

Its function is as follows. Retroviral restriction factor that prevents infection by gammaretroviruses. Acts by interacting with the capsid protein ca after entry of the virus into the cell. This interaction presumably disrupt the capsid thereby inactivating the viral genome, making it unable to enter host nucleus and integrate into host genome. This is Friend virus susceptibility protein 1 (Fv1) from Mus musculus (Mouse).